We begin with the raw amino-acid sequence, 2517 residues long: Serine/threonine-protein kinase ATR (2517 aa).

The stretch at 1178-1214 (EPMLEQIVNVLMAGCQHDDSQLQMASAKCLGELGAID) is one HEAT repeat. The FAT domain maps to 1509 to 2066 (LVSRASYNCG…LWMLLPHFKS (558 aa)). Phosphoserine is present on Ser1569. Tyr1570 is modified (phosphotyrosine). Ser1573 bears the Phosphoserine mark. Thr1575 is subject to Phosphothreonine. Residues 2184–2508 (FQESVLILRS…EATKVDNLAS (325 aa)) form the PI3K/PI4K catalytic domain. Residues 2190–2196 (ILRSAAK) form a G-loop region. The tract at residues 2360-2368 (GLGDRHGEN) is catalytic loop. The tract at residues 2380–2404 (HVDFNCLFNQGELLPYPEVVPFRLT) is activation loop. The FATC domain maps to 2485–2517 (IPLSTEGQVNFLINEATKVDNLASMYIGWGAFL).

The protein belongs to the PI3/PI4-kinase family. ATM subfamily. In terms of assembly, interacts with mus304. It depends on Mn(2+) as a cofactor.

Its subcellular location is the nucleus. It carries out the reaction L-seryl-[protein] + ATP = O-phospho-L-seryl-[protein] + ADP + H(+). The catalysed reaction is L-threonyl-[protein] + ATP = O-phospho-L-threonyl-[protein] + ADP + H(+). Functionally, serine/threonine protein kinase which activates checkpoint signaling upon genotoxic stresses such as ionizing radiation (IR), ultraviolet light (UV), or DNA replication stalling, thereby acting as a DNA damage sensor. Recognizes the substrate consensus sequence [ST]-Q. Phosphorylates various proteins, which collectively inhibits DNA replication and mitosis and promotes DNA repair and recombination. Phosphorylates grp/CHK1. Phosphorylates 'Ser-137' of histone variant H2AX/H2AV at sites of DNA damage, thereby regulating DNA damage response mechanism. Essential for the DNA damage checkpoint in larval imaginal disks and neuroblasts and for the DNA replication checkpoint in the embryo. Also has an essential role during early nuclear divisions in embryos, where it is required to delay mitosis in response to incomplete DNA replication. Also plays an important role during meiosis, where it may monitor double-strand-break repair during meiotic crossing over, to regulate the progression of prophase I, and to enforce metaphase I delay observed at the end of oogenesis. Involved in telomere maintenance and prevention of telomere fusion; potentially functioning downstream of moi/modigliani. This Drosophila melanogaster (Fruit fly) protein is Serine/threonine-protein kinase ATR (mei-41).